A 205-amino-acid chain; its full sequence is N-(5'-phosphoribosyl)anthranilate isomerase (205 aa).

It belongs to the TrpF family.

The catalysed reaction is N-(5-phospho-beta-D-ribosyl)anthranilate = 1-(2-carboxyphenylamino)-1-deoxy-D-ribulose 5-phosphate. The protein operates within amino-acid biosynthesis; L-tryptophan biosynthesis; L-tryptophan from chorismate: step 3/5. The sequence is that of N-(5'-phosphoribosyl)anthranilate isomerase from Trichlorobacter lovleyi (strain ATCC BAA-1151 / DSM 17278 / SZ) (Geobacter lovleyi).